The primary structure comprises 411 residues: Prostaglandin E2 receptor EP3 subtype (411 aa).

At 1–49 the chain is on the extracellular side; the sequence is MKETRGDGGSAPFCTRLNHSYPGMWAPEARGNLTRPPGPGEDCGSVSVA. N-linked (GlcNAc...) asparagine glycans are attached at residues N18 and N32. The helical transmembrane segment at 50–74 threads the bilayer; it reads FPITMLITGFVGNALAMLLVSRSYR. At 75-87 the chain is on the cytoplasmic side; the sequence is RRESKRKKSFLLC. The chain crosses the membrane as a helical span at residues 88–108; it reads IGWLALTDLVGQLLTSPVVIL. Topologically, residues 109 to 127 are extracellular; sequence VYLSKQRWEQLDPSGRLCT. A disulfide bridge connects residues C126 and C204. A helical membrane pass occupies residues 128–149; it reads FFGLTMTVFGLSSLFIASAMAV. Topologically, residues 150 to 171 are cytoplasmic; the sequence is ERALAIRAPHWYASHMKTRATR. The chain crosses the membrane as a helical span at residues 172-193; the sequence is AVLLGVWLAVLAFALLPVLGVG. The Extracellular portion of the chain corresponds to 194-223; sequence QYTIQWPGTWCFISTGRGDNGTSSSHNWGN. An N-linked (GlcNAc...) asparagine glycan is attached at N213. A helical transmembrane segment spans residues 224 to 249; that stretch reads LFFASTFAFLGLLALAITFTCNLATI. Topologically, residues 250 to 279 are cytoplasmic; that stretch reads KALVSRCRAKAAASQSSAQWGRITTETAIQ. A helical transmembrane segment spans residues 280–303; it reads LMGIMCVLSVCWSPLLIMMLKMIF. The Extracellular portion of the chain corresponds to 304–323; the sequence is NQTSVEHCKTDTGKQKECNF. The chain crosses the membrane as a helical span at residues 324–345; the sequence is FLIAVRLASLNQILDPWVYLLL. At 346-411 the chain is on the cytoplasmic side; the sequence is RKILLRKFCQ…ADPGARPYQQ (66 aa). Basic and acidic residues predominate over residues 367-390; it reads IQRENRNVSHSGQHEEARDSEKSK. The segment at 367–392 is disordered; that stretch reads IQRENRNVSHSGQHEEARDSEKSKTI.

It belongs to the G-protein coupled receptor 1 family. Interacts (via C-terminus) with MKLN1. As to expression, in the kidney cortex and medulla, adrenal gland and stomach. In kidney, expression is higher in tubules in the outer medulla, with lower levels in cortex. In kidney cortex, expression is restricted to distal tubules.

It is found in the cell membrane. In terms of biological role, receptor for prostaglandin E2 (PGE2). Required for normal development of fever in response to pyrinogens, including IL1B, prostaglandin E2 and bacterial lipopolysaccharide (LPS). Required for normal potentiation of platelet aggregation by prostaglandin E2, and thus plays a role in the regulation of blood coagulation. Required for increased HCO3(-) secretion in the duodenum in response to mucosal acidification, and thereby contributes to the protection of the mucosa against acid-induced ulceration. Not required for normal kidney function, normal urine volume and osmolality. The polypeptide is Prostaglandin E2 receptor EP3 subtype (PTGER3) (Oryctolagus cuniculus (Rabbit)).